A 218-amino-acid chain; its full sequence is Thiamine-phosphate synthase (218 aa).

4-amino-2-methyl-5-(diphosphooxymethyl)pyrimidine-binding positions include Gln-43–Lys-47 and Asn-78. Residues Asp-79 and Asp-98 each coordinate Mg(2+). Ser-117 contributes to the 4-amino-2-methyl-5-(diphosphooxymethyl)pyrimidine binding site. Thr-143–Ser-145 provides a ligand contact to 2-[(2R,5Z)-2-carboxy-4-methylthiazol-5(2H)-ylidene]ethyl phosphate. Lys-146 contributes to the 4-amino-2-methyl-5-(diphosphooxymethyl)pyrimidine binding site. Residues Gly-174 and Ile-194 to Ser-195 each bind 2-[(2R,5Z)-2-carboxy-4-methylthiazol-5(2H)-ylidene]ethyl phosphate.

The protein belongs to the thiamine-phosphate synthase family. It depends on Mg(2+) as a cofactor.

The catalysed reaction is 2-[(2R,5Z)-2-carboxy-4-methylthiazol-5(2H)-ylidene]ethyl phosphate + 4-amino-2-methyl-5-(diphosphooxymethyl)pyrimidine + 2 H(+) = thiamine phosphate + CO2 + diphosphate. It carries out the reaction 2-(2-carboxy-4-methylthiazol-5-yl)ethyl phosphate + 4-amino-2-methyl-5-(diphosphooxymethyl)pyrimidine + 2 H(+) = thiamine phosphate + CO2 + diphosphate. The enzyme catalyses 4-methyl-5-(2-phosphooxyethyl)-thiazole + 4-amino-2-methyl-5-(diphosphooxymethyl)pyrimidine + H(+) = thiamine phosphate + diphosphate. The protein operates within cofactor biosynthesis; thiamine diphosphate biosynthesis; thiamine phosphate from 4-amino-2-methyl-5-diphosphomethylpyrimidine and 4-methyl-5-(2-phosphoethyl)-thiazole: step 1/1. Functionally, condenses 4-methyl-5-(beta-hydroxyethyl)thiazole monophosphate (THZ-P) and 2-methyl-4-amino-5-hydroxymethyl pyrimidine pyrophosphate (HMP-PP) to form thiamine monophosphate (TMP). This is Thiamine-phosphate synthase from Lactococcus lactis subsp. cremoris (strain MG1363).